Here is a 158-residue protein sequence, read N- to C-terminus: MKIIIQNQQDKYQIDESISKIIEDSVLNTLKIFMDDENYEISVMIVDNQFIKELNKHYRSIDKETDVLSFPIFEFKNGELQEDIAIVEEEIPLGDIVISIEKAYEQAKEFGHSVEREIAYLTVHSVLHLLGFDHIEEEDRMLMRKYEEMVLEGMGLTR.

Positions 124, 128, and 134 each coordinate Zn(2+).

The protein belongs to the endoribonuclease YbeY family. The cofactor is Zn(2+).

The protein resides in the cytoplasm. Its function is as follows. Single strand-specific metallo-endoribonuclease involved in late-stage 70S ribosome quality control and in maturation of the 3' terminus of the 16S rRNA. The protein is Endoribonuclease YbeY of Caldicellulosiruptor saccharolyticus (strain ATCC 43494 / DSM 8903 / Tp8T 6331).